Here is a 507-residue protein sequence, read N- to C-terminus: Cytochrome P450 monooxygenase nodZ (507 aa).

2 consecutive transmembrane segments (helical) span residues 1–21 (MITA…FSLL) and 205–225 (GFLH…PWFL). The N-linked (GlcNAc...) asparagine glycan is linked to N352. C445 serves as a coordination point for heme.

The protein belongs to the cytochrome P450 family. Heme serves as cofactor.

The protein resides in the membrane. The protein operates within secondary metabolite biosynthesis. Cytochrome P450 monooxygenase; part of the gene cluster that mediates the biosynthesis of the indole diterpenes nodulisporic acids (NA). Nodulisporic acid A (NAA) and its chemically modified derivatives are of particular significance because of their highly potent insecticidal activity against blood-feeding arthropods and lack of observable adverse effects on mammals, in particular the tremogenicity associated with the paspaline-derived IDTs is not observed. The geranylgeranyl diphosphate (GGPP) synthase ggs1, localized outside of the cluster, is proposed to catalyze the first step in nodulisporic acid biosynthesis via conversion of farnesyl pyrophosphate and isopentyl pyrophosphate into geranylgeranyl pyrophosphate (GGPP). Condensation of indole-3-glycerol phosphate with GGPP by the prenyl transferase nodC then forms 3-geranylgeranylindole (3-GGI). Epoxidation by the FAD-dependent monooxygenase nodM leads to a single-epoxidized-GGI that is substrate of the terpene cyclase nodB for cyclization to yield emindole SB. The terminal methyl carbon, C28, of emindole SB is then oxidized by the cytochrome P450 monooxygenase nodW to produce nodulisporic acid F (NAF), the pentacyclic core of NAA. NAF is converted to nodulisporic acid E (NAE) via prenylation. This step is probably performed by one of the indole diterpene prenyltransferases nodD1 or nodD2. Several oxidation steps performed by the FAD-linked oxidoreductase nodO and one of the cytochrome P450 monooxygenase nodR, nodX or nodZ further convert NAE to nodulisporic acid D (NAD). NAD is substrate of cytochrome P450 monooxygenase nodJ to produce the precursor of nodulisporic acid C (NAC), converted to NAC by one of the indole diterpene prenyltransferases nodD1 or nodD2. The FAD-dependent monooxygenase nodY2 then oxidizes NAC to nodulisporic acid B (NAB). Finally NAB is converted to NAA by one of the cytochrome P450 monooxygenases nodR, nodX or nodZ. The polypeptide is Cytochrome P450 monooxygenase nodZ (Hypoxylon pulicicidum).